The chain runs to 735 residues: E3 UFM1-protein ligase 1 homolog (735 aa).

The disordered stretch occupies residues 389–445 (RLEAEKKKQGGAKAAVKVQEETDDWGDGKKGGKGGKKNAKSVKGGSKSSAPSTSSNL). A compositionally biased stretch (basic residues) spans 419–428 (GGKGGKKNAK). The span at 429–445 (SVKGGSKSSAPSTSSNL) shows a compositional bias: low complexity.

The protein belongs to the UFL1 family.

Functionally, E3 UFM1-protein ligase that mediates ufmylation of target proteins. This Caenorhabditis elegans protein is E3 UFM1-protein ligase 1 homolog (ufl-1).